Consider the following 82-residue polypeptide: Small ribosomal subunit protein bS18 (82 aa).

Residues 1–10 (MTDTNQNSSR) show a composition bias toward polar residues. Residues 1-21 (MTDTNQNSSRRPFHRRRKTCP) are disordered.

This sequence belongs to the bacterial ribosomal protein bS18 family. Part of the 30S ribosomal subunit. Forms a tight heterodimer with protein bS6.

Functionally, binds as a heterodimer with protein bS6 to the central domain of the 16S rRNA, where it helps stabilize the platform of the 30S subunit. The protein is Small ribosomal subunit protein bS18 of Bartonella tribocorum (strain CIP 105476 / IBS 506).